The chain runs to 295 residues: MHARMSVEIPQQDVMIVTGMSGAGRSTVGNALEDLGWYVVDNLPPQMLKPLVELAGRAGTSLPKIAAVVDVRGGDFFSELRDILHTFGTGPRLRVLFLEATDAALVRRFEQVRRPHPLQGNGTLLDGIAAERARMIEIREASDLVIDTSELNIHQLATTITEQFSGADDAGVRVTVMSFGFKYGTPADADMVADMRFLPNPFWTPELRPLTGRDKAVSDYVLGQEGAEEFVHAYARALAPVLAGYQRENKRHATIAIGCTGGKHRSVAVSEELSSLLRALPGVAVSTKHRDLGRE.

19-26 contributes to the ATP binding site; sequence GMSGAGRS. GTP is bound at residue 70–73; the sequence is DVRG.

Belongs to the RapZ-like family.

Functionally, displays ATPase and GTPase activities. The protein is Nucleotide-binding protein CMS1991 of Clavibacter sepedonicus (Clavibacter michiganensis subsp. sepedonicus).